Consider the following 484-residue polypeptide: Maintenance of mitochondrial morphology protein 1 (484 aa).

The Lumenal portion of the chain corresponds to 1–22 (MSFQQSETVPVPAQSSLSFTQG). The helical transmembrane segment at 23–43 (FLLGQLSVVLLIGAFIKFFIF) threads the bilayer. Topologically, residues 44-484 (GEAPPPPSRG…PGSLSGAAAR (441 aa)) are cytoplasmic. Disordered stretches follow at residues 50–98 (PSRG…SSST), 272–319 (STPP…TGSP), and 388–484 (RTGV…AAAR). A compositionally biased stretch (basic residues) spans 54-64 (LSHRASTHRRS). 2 stretches are compositionally biased toward polar residues: residues 65–78 (NSIYTINHNEANNR) and 85–98 (SNSNVLRPVPSSST). The SMP-LTD domain maps to 130-380 (QPESLDWFNV…EPRVQVVGLP (251 aa)). Pro residues predominate over residues 272–286 (STPPLHTPSPSPSPP). The segment covering 399–408 (TGSNAASRSA) has biased composition (polar residues). Residues 413–427 (LGDHHLGDREPEGLR) show a composition bias toward basic and acidic residues. 2 stretches are compositionally biased toward polar residues: residues 437–449 (QFDSVSRTSSYNV) and 466–476 (GALSEQFQMPG).

It belongs to the MMM1 family. In terms of assembly, homodimer. Component of the ER-mitochondria encounter structure (ERMES) or MDM complex, composed of mmm1, mdm10, mdm12 and mdm34. A mmm1 homodimer associates with one molecule of mdm12 on each side in a pairwise head-to-tail manner, and the SMP-LTD domains of mmm1 and mdm12 generate a continuous hydrophobic tunnel for phospholipid trafficking.

The protein resides in the endoplasmic reticulum membrane. Component of the ERMES/MDM complex, which serves as a molecular tether to connect the endoplasmic reticulum (ER) and mitochondria. Components of this complex are involved in the control of mitochondrial shape and protein biogenesis, and function in nonvesicular lipid trafficking between the ER and mitochondria. The mdm12-mmm1 subcomplex functions in the major beta-barrel assembly pathway that is responsible for biogenesis of all outer membrane beta-barrel proteins, and acts in a late step after the SAM complex. The mdm10-mdm12-mmm1 subcomplex further acts in the TOM40-specific pathway after the action of the mdm12-mmm1 complex. Essential for establishing and maintaining the structure of mitochondria and maintenance of mtDNA nucleoids. This is Maintenance of mitochondrial morphology protein 1 from Aspergillus niger (strain ATCC MYA-4892 / CBS 513.88 / FGSC A1513).